Here is a 676-residue protein sequence, read N- to C-terminus: UvrABC system protein C (676 aa).

The 80-residue stretch at 16–95 (VEPGVYRFRD…IKEFDPRFNI (80 aa)) folds into the GIY-YIG domain. The region spanning 208–243 (DRLVRDLERKMTAAAEDLDFERAARLRDDIGALRRA) is the UVR domain.

Belongs to the UvrC family. In terms of assembly, interacts with UvrB in an incision complex.

It localises to the cytoplasm. The UvrABC repair system catalyzes the recognition and processing of DNA lesions. UvrC both incises the 5' and 3' sides of the lesion. The N-terminal half is responsible for the 3' incision and the C-terminal half is responsible for the 5' incision. This is UvrABC system protein C from Mycobacterium sp. (strain JLS).